The chain runs to 111 residues: Large ribosomal subunit protein P1 (111 aa).

A disordered region spans residues 75-111 (AAAPAAEEKAEEEKKEEEEEKKEEEVDLSGLSGMFGF). Positions 88 to 101 (KKEEEEEKKEEEVD) are enriched in acidic residues.

Belongs to the eukaryotic ribosomal protein P1/P2 family. As to quaternary structure, part of the 50S ribosomal subunit. Homodimer, it forms part of the ribosomal stalk which helps the ribosome interact with GTP-bound translation factors. Forms a heptameric uL10/P0(P1)2(P1)2(P1)2 complex, where uL10/P0 forms an elongated spine to which the P1 dimers bind in a sequential fashion.

Its function is as follows. Forms part of the ribosomal stalk, playing a central role in the interaction of the ribosome with GTP-bound translation factors. The chain is Large ribosomal subunit protein P1 from Aeropyrum pernix (strain ATCC 700893 / DSM 11879 / JCM 9820 / NBRC 100138 / K1).